A 248-amino-acid chain; its full sequence is 1-(5-phosphoribosyl)-5-[(5-phosphoribosylamino)methylideneamino] imidazole-4-carboxamide isomerase (248 aa).

D8 serves as the catalytic Proton acceptor. D131 (proton donor) is an active-site residue.

The protein belongs to the HisA/HisF family.

The protein localises to the cytoplasm. The enzyme catalyses 1-(5-phospho-beta-D-ribosyl)-5-[(5-phospho-beta-D-ribosylamino)methylideneamino]imidazole-4-carboxamide = 5-[(5-phospho-1-deoxy-D-ribulos-1-ylimino)methylamino]-1-(5-phospho-beta-D-ribosyl)imidazole-4-carboxamide. Its pathway is amino-acid biosynthesis; L-histidine biosynthesis; L-histidine from 5-phospho-alpha-D-ribose 1-diphosphate: step 4/9. The sequence is that of 1-(5-phosphoribosyl)-5-[(5-phosphoribosylamino)methylideneamino] imidazole-4-carboxamide isomerase from Nitrosomonas eutropha (strain DSM 101675 / C91 / Nm57).